The sequence spans 207 residues: Outer-membrane lipoprotein LolB (207 aa).

A signal peptide spans 1-21; that stretch reads MPMRKRHFYRLLPLASLLLAA. C22 carries N-palmitoyl cysteine lipidation. Residue C22 is the site of S-diacylglycerol cysteine attachment.

This sequence belongs to the LolB family. In terms of assembly, monomer.

The protein resides in the cell outer membrane. In terms of biological role, plays a critical role in the incorporation of lipoproteins in the outer membrane after they are released by the LolA protein. The polypeptide is Outer-membrane lipoprotein LolB (Yersinia pseudotuberculosis serotype O:1b (strain IP 31758)).